We begin with the raw amino-acid sequence, 113 residues long: uncharacterized protein (113 aa).

This sequence to H.influenzae HI_1053 and P.denitrificans COX locus Uncharacterized protein 4.

This is an uncharacterized protein from Cupriavidus necator (strain ATCC 17699 / DSM 428 / KCTC 22496 / NCIMB 10442 / H16 / Stanier 337) (Ralstonia eutropha).